The sequence spans 120 residues: Large ribosomal subunit protein uL18 (120 aa).

This sequence belongs to the universal ribosomal protein uL18 family. In terms of assembly, part of the 50S ribosomal subunit; part of the 5S rRNA/L5/L18/L25 subcomplex. Contacts the 5S and 23S rRNAs.

Its function is as follows. This is one of the proteins that bind and probably mediate the attachment of the 5S RNA into the large ribosomal subunit, where it forms part of the central protuberance. The chain is Large ribosomal subunit protein uL18 from Synechococcus elongatus (strain ATCC 33912 / PCC 7942 / FACHB-805) (Anacystis nidulans R2).